The following is a 647-amino-acid chain: Chaperone protein DnaK (647 aa).

Thr-199 carries the post-translational modification Phosphothreonine; by autocatalysis. Positions 602 to 647 (MYAQEQAQAGQQAGPGAGSASAGQSGEKPVEGEVVDAEFEEVKDKK) are disordered. A compositionally biased stretch (low complexity) spans 604 to 627 (AQEQAQAGQQAGPGAGSASAGQSG).

It belongs to the heat shock protein 70 family.

In terms of biological role, acts as a chaperone. This is Chaperone protein DnaK from Nitrosomonas eutropha (strain DSM 101675 / C91 / Nm57).